Reading from the N-terminus, the 194-residue chain is MQLIEKAMLPTPWGNFLIFGFEEKKNGKNHVALVYGDIKTNTPTLSRVHSECLTGDAFFSLRCDCGSQLEMSMKRISQEGSGVLIYHRQEGRNIGLLNKIKAYALQDRGLDTVQANQKLGFSADERDFSLCADIFNILNIKKIRLLTNNPFKVQMLSDAGINIVERVPLIVKKNPKNAYYLKTKAEKMGHLLSE.

Residue 47-51 (RVHSE) coordinates GTP. Residues Cys-52, Cys-63, and Cys-65 each contribute to the Zn(2+) site. GTP-binding positions include Gln-68, 90-92 (EGR), and Thr-112. Asp-124 (proton acceptor) is an active-site residue. Catalysis depends on Arg-126, which acts as the Nucleophile. The GTP site is built by Thr-147 and Lys-152.

It belongs to the GTP cyclohydrolase II family. In terms of assembly, homodimer. Zn(2+) is required as a cofactor.

It catalyses the reaction GTP + 4 H2O = 2,5-diamino-6-hydroxy-4-(5-phosphoribosylamino)-pyrimidine + formate + 2 phosphate + 3 H(+). Its pathway is cofactor biosynthesis; riboflavin biosynthesis; 5-amino-6-(D-ribitylamino)uracil from GTP: step 1/4. Functionally, catalyzes the conversion of GTP to 2,5-diamino-6-ribosylamino-4(3H)-pyrimidinone 5'-phosphate (DARP), formate and pyrophosphate. In Buchnera aphidicola subsp. Acyrthosiphon pisum (strain APS) (Acyrthosiphon pisum symbiotic bacterium), this protein is GTP cyclohydrolase-2.